The primary structure comprises 129 residues: Small ribosomal subunit protein uS9 (129 aa).

A disordered region spans residues 110-129 (VERKKYGKKKARKSFQFSKR). Residues 114–129 (KYGKKKARKSFQFSKR) show a composition bias toward basic residues.

The protein belongs to the universal ribosomal protein uS9 family.

The polypeptide is Small ribosomal subunit protein uS9 (Chlorobaculum parvum (strain DSM 263 / NCIMB 8327) (Chlorobium vibrioforme subsp. thiosulfatophilum)).